We begin with the raw amino-acid sequence, 549 residues long: Chaperonin GroEL (549 aa).

Residues 29–32 (TLGP), K50, 86–90 (DGTTT), G413, 479–481 (NAA), and D496 each bind ATP. The interval 522–549 (VSDKPEKPQQGGQGGGGMGGGDMGGMDF) is disordered. Residues 532 to 549 (GGQGGGGMGGGDMGGMDF) show a composition bias toward gly residues.

It belongs to the chaperonin (HSP60) family. As to quaternary structure, forms a cylinder of 14 subunits composed of two heptameric rings stacked back-to-back. Interacts with the co-chaperonin GroES.

The protein localises to the cytoplasm. The catalysed reaction is ATP + H2O + a folded polypeptide = ADP + phosphate + an unfolded polypeptide.. In terms of biological role, together with its co-chaperonin GroES, plays an essential role in assisting protein folding. The GroEL-GroES system forms a nano-cage that allows encapsulation of the non-native substrate proteins and provides a physical environment optimized to promote and accelerate protein folding. In Deinococcus deserti (strain DSM 17065 / CIP 109153 / LMG 22923 / VCD115), this protein is Chaperonin GroEL.